The primary structure comprises 1064 residues: Carbamoyl phosphate synthase pyrimidine-specific large chain (1064 aa).

The segment at 1–401 (MPKRRDIETI…SLLKAVRSLE (401 aa)) is carboxyphosphate synthetic domain. Residues R129, R169, G175, G176, R208, I210, G241, I242, H243, Q284, and E298 each coordinate ATP. The ATP-grasp 1 domain maps to 133-327 (RALMNELGEP…IAKLAAKIAV (195 aa)). 3 residues coordinate Mg(2+): Q284, E298, and N300. Q284, E298, and N300 together coordinate Mn(2+). Positions 402–546 (IGVHHLELNE…YSTYEEENES (145 aa)) are oligomerization domain. A carbamoyl phosphate synthetic domain region spans residues 547-929 (IVTEKPSVIV…ALYKGLVASG (383 aa)). The region spanning 671–861 (EQALSELGIP…MANLATKAIL (191 aa)) is the ATP-grasp 2 domain. The ATP site is built by R707, R746, I748, E752, G777, V778, H779, S780, Q820, and E832. Mg(2+) contacts are provided by Q820, E832, and N834. Residues Q820, E832, and N834 each contribute to the Mn(2+) site. An MGS-like domain is found at 930-1064 (IQIQPHGAVL…TAMTEGLVRS (135 aa)). The allosteric domain stretch occupies residues 930–1064 (IQIQPHGAVL…TAMTEGLVRS (135 aa)).

Belongs to the CarB family. Composed of two chains; the small (or glutamine) chain promotes the hydrolysis of glutamine to ammonia, which is used by the large (or ammonia) chain to synthesize carbamoyl phosphate. Tetramer of heterodimers (alpha,beta)4. The cofactor is Mg(2+). Requires Mn(2+) as cofactor.

It catalyses the reaction hydrogencarbonate + L-glutamine + 2 ATP + H2O = carbamoyl phosphate + L-glutamate + 2 ADP + phosphate + 2 H(+). The enzyme catalyses hydrogencarbonate + NH4(+) + 2 ATP = carbamoyl phosphate + 2 ADP + phosphate + 2 H(+). Its pathway is amino-acid biosynthesis; L-arginine biosynthesis; carbamoyl phosphate from bicarbonate: step 1/1. It functions in the pathway pyrimidine metabolism; UMP biosynthesis via de novo pathway; (S)-dihydroorotate from bicarbonate: step 1/3. In terms of biological role, small subunit of the glutamine-dependent carbamoyl phosphate synthetase (CPSase). CPSase catalyzes the formation of carbamoyl phosphate from the ammonia moiety of glutamine, carbonate, and phosphate donated by ATP, constituting the first step of the biosynthetic pathway leading to pyrimidine nucleotides. The large subunit (synthetase) binds the substrates ammonia (free or transferred from glutamine from the small subunit), hydrogencarbonate and ATP and carries out an ATP-coupled ligase reaction, activating hydrogencarbonate by forming carboxy phosphate which reacts with ammonia to form carbamoyl phosphate. In Geobacillus stearothermophilus (Bacillus stearothermophilus), this protein is Carbamoyl phosphate synthase pyrimidine-specific large chain (pyrAB).